The sequence spans 399 residues: Elongation factor Tu (399 aa).

The 195-residue stretch at 10–204 folds into the tr-type G domain; sequence KPHVNIGTIG…AVDASIPEPE (195 aa). Residues 19 to 26 form a G1 region; the sequence is GHVDHGKT. 19–26 provides a ligand contact to GTP; it reads GHVDHGKT. Threonine 26 is a Mg(2+) binding site. The G2 stretch occupies residues 60 to 64; it reads GITIN. A G3 region spans residues 81–84; the sequence is DCPG. GTP is bound by residues 81–85 and 136–139; these read DCPGH and NKCD. Residues 136–139 are G4; that stretch reads NKCD. Residues 174-176 form a G5 region; sequence SGL.

This sequence belongs to the TRAFAC class translation factor GTPase superfamily. Classic translation factor GTPase family. EF-Tu/EF-1A subfamily. Monomer.

The protein localises to the cytoplasm. The enzyme catalyses GTP + H2O = GDP + phosphate + H(+). In terms of biological role, GTP hydrolase that promotes the GTP-dependent binding of aminoacyl-tRNA to the A-site of ribosomes during protein biosynthesis. This is Elongation factor Tu from Prochlorococcus marinus subsp. pastoris (strain CCMP1986 / NIES-2087 / MED4).